The sequence spans 285 residues: 4-diphosphocytidyl-2-C-methyl-D-erythritol kinase (285 aa).

K10 is a catalytic residue. 93–103 is an ATP binding site; it reads PIGGGLGGGSS. D135 is a catalytic residue.

It belongs to the GHMP kinase family. IspE subfamily.

It carries out the reaction 4-CDP-2-C-methyl-D-erythritol + ATP = 4-CDP-2-C-methyl-D-erythritol 2-phosphate + ADP + H(+). It participates in isoprenoid biosynthesis; isopentenyl diphosphate biosynthesis via DXP pathway; isopentenyl diphosphate from 1-deoxy-D-xylulose 5-phosphate: step 3/6. Catalyzes the phosphorylation of the position 2 hydroxy group of 4-diphosphocytidyl-2C-methyl-D-erythritol. This Vesicomyosocius okutanii subsp. Calyptogena okutanii (strain HA) protein is 4-diphosphocytidyl-2-C-methyl-D-erythritol kinase.